A 648-amino-acid polypeptide reads, in one-letter code: DNA gyrase subunit B (648 aa).

Residues 432 to 546 (RELFIVEGNS…YGFVYLAQPP (115 aa)) enclose the Toprim domain. Mg(2+) contacts are provided by Glu438, Asp511, and Asp513.

It belongs to the type II topoisomerase GyrB family. In terms of assembly, heterotetramer, composed of two GyrA and two GyrB chains. In the heterotetramer, GyrA contains the active site tyrosine that forms a transient covalent intermediate with DNA, while GyrB binds cofactors and catalyzes ATP hydrolysis. Requires Mg(2+) as cofactor. Mn(2+) serves as cofactor. Ca(2+) is required as a cofactor.

The protein localises to the cytoplasm. The enzyme catalyses ATP-dependent breakage, passage and rejoining of double-stranded DNA.. Its function is as follows. A type II topoisomerase that negatively supercoils closed circular double-stranded (ds) DNA in an ATP-dependent manner to modulate DNA topology and maintain chromosomes in an underwound state. Negative supercoiling favors strand separation, and DNA replication, transcription, recombination and repair, all of which involve strand separation. Also able to catalyze the interconversion of other topological isomers of dsDNA rings, including catenanes and knotted rings. Type II topoisomerases break and join 2 DNA strands simultaneously in an ATP-dependent manner. The polypeptide is DNA gyrase subunit B (Metamycoplasma hominis (strain ATCC 23114 / DSM 25592 / NBRC 14850 / NCTC 10111 / PG21) (Mycoplasma hominis)).